Here is a 192-residue protein sequence, read N- to C-terminus: MTYRTLCILAFTALISACSSRPTGPTTPPPESVSAISKWETSGRVGIRTKNDAVSGNFNWQKDPKTFALSIVGPFGQGATHLNQSNDGVVTLAYEDTVVTGNNPETLLQQELGWEFPVNQVTYWIRGLAYPNSAAKISKDPDSQLPNKIEQDGWLITYSNFTKVDGLSLPQKMQVSNPPFRVNLIINQWTIQ.

The first 17 residues, 1-17 (MTYRTLCILAFTALISA), serve as a signal peptide directing secretion. Residue Cys18 is the site of N-palmitoyl cysteine attachment. Cys18 carries S-diacylglycerol cysteine lipidation.

It belongs to the LolB family. Monomer.

The protein localises to the cell outer membrane. Its function is as follows. Plays a critical role in the incorporation of lipoproteins in the outer membrane after they are released by the LolA protein. The polypeptide is Outer-membrane lipoprotein LolB (Marinomonas sp. (strain MWYL1)).